A 219-amino-acid polypeptide reads, in one-letter code: ATP-dependent dethiobiotin synthetase BioD (219 aa).

ATP is bound at residue 12–17 (GVGKTI). Threonine 16 is a Mg(2+) binding site. Lysine 32 is an active-site residue. ATP contacts are provided by residues aspartate 43 and 96 to 99 (ETSG). Residues aspartate 43 and glutamate 96 each contribute to the Mg(2+) site.

It belongs to the dethiobiotin synthetase family. Homodimer. It depends on Mg(2+) as a cofactor.

It is found in the cytoplasm. The enzyme catalyses (7R,8S)-7,8-diammoniononanoate + CO2 + ATP = (4R,5S)-dethiobiotin + ADP + phosphate + 3 H(+). The protein operates within cofactor biosynthesis; biotin biosynthesis; biotin from 7,8-diaminononanoate: step 1/2. Catalyzes a mechanistically unusual reaction, the ATP-dependent insertion of CO2 between the N7 and N8 nitrogen atoms of 7,8-diaminopelargonic acid (DAPA, also called 7,8-diammoniononanoate) to form a ureido ring. This is ATP-dependent dethiobiotin synthetase BioD from Chlamydia pneumoniae (Chlamydophila pneumoniae).